Here is a 1384-residue protein sequence, read N- to C-terminus: Protein Gawky (1384 aa).

4 disordered regions span residues 1-99 (MREA…VWTG), 148-227 (NGSS…DPRG), 263-335 (TAST…DDGT), and 447-501 (VGAP…SGWS). A required for interaction with AGO1 region spans residues 1–205 (MREALFSQDG…HRGGNGSGAT (205 aa)). Sufficient for miRNA-mediated silencing regions lie at residues 1 to 605 (MREA…SLGS) and 605 to 830 (SYAD…SVHL). The span at 15–24 (HVNQDTNWEV) shows a compositional bias: polar residues. A compositionally biased stretch (low complexity) spans 150-171 (SSNITGSSGVATGSSGNSSNAG). The tract at residues 205–490 (TSSDPRDIRM…GVSWGNKQSK (286 aa)) is minimal N-terminal region required for miRNA-mediated silencing. Positions 208–225 (DPRDIRMIDPRDPIRGDP) are enriched in basic and acidic residues. Composition is skewed to polar residues over residues 449-475 (APSS…NSWS) and 485-501 (GNKQ…SGWS). In terms of domain architecture, UBA spans 547–588 (IIKQSKQYRILVENGFKKEDVERALVIANMNIEEAADMLRAN). 7 disordered regions span residues 607-626 (ADHN…PVNS), 809-841 (QNMQ…LRGH), 889-942 (TEFS…NKDW), 962-1022 (EPGK…LSSS), 1052-1102 (TSPL…GVQT), 1188-1221 (SENE…GVGT), and 1318-1368 (GTAN…PSGR). Positions 809 to 826 (QNMQPTSQQQQPQQQQLP) are enriched in low complexity. A not required for interaction with AGO1 or miRNAs or for localization to P-bodies but necessary for miRNA-mediated silencing and for interaction with pAbp region spans residues 862 to 1115 (YQGASNQQSR…NWTGGNTTWG (254 aa)). The span at 898–924 (TKQNLTANTSNINSLGLQNDSTWSTGR) shows a compositional bias: polar residues. The interval 940-1215 (KDWSVAQPTS…TSSSGTSGGN (276 aa)) is sufficient for miRNA-mediated silencing. Residues 1010–1022 (SPTDLPPLSLSSS) are compositionally biased toward low complexity. A compositionally biased stretch (polar residues) spans 1052 to 1061 (TSPLNKSSSR). Over residues 1068–1084 (TANSNKSANSNASTPTT) the composition is skewed to low complexity. An RRM domain is found at 1117–1189 (SWLLLKNLTA…TTIFAESPSE (73 aa)). The span at 1188-1203 (SENEVQSIMQHLPQTP) shows a compositional bias: polar residues. The segment at 1200–1384 (PQTPSSTSSS…ISLVYSIVDD (185 aa)) is not required for interaction with AGO1 or miRNAs or for localization to P-bodies but necessary for miRNA-mediated silencing, dissociation from AGO1 and miRNAs and interaction with pAbp. Residues 1211–1220 (TSGGNVGGVG) show a composition bias toward gly residues. Over residues 1318–1349 (GTANSSGSKSSANNLASGQSSASNLTNSTNST) the composition is skewed to low complexity. Positions 1350-1365 (WRQTSQNQALQSQSRP) are enriched in polar residues.

Belongs to the GW182 family. Component of the miRNA-directed RNA-induced silencing complex (miRISC), composed of at least AGO1 and gw, which bind mature miRNAs and targets the selective destruction of homologous RNAs. Interacts (via N-terminal region) with AGO1 (via Piwi domain); the interaction is essential for localization of AGO1 in P-bodies and for miRNA-mediated silencing. Interacts with pAbp/PABPC1; this interaction interferes with the binding of pAbp to eIF4G and is required for miRNA-mediated silencing. Interacts with CCR4-NOT complex members Not1, Rga/NOT2, twin/CCR4, Pop2 and NOT3/5 and with PAN complex members CG8232/PAN2 and CG11486/PAN3.

It is found in the cytoplasm. Its subcellular location is the P-body. Required for gene silencing mediated by micro-RNAs (miRNAs). Silences both polyadenylated and deadenylated mRNAs. Required for miRNA-mediated translational repression and mRNA decay. Not required for miRNA target recognition. Necessary to initiate but not to maintain silencing. Promotes mRNA deadenylation through the recruitment of the CCR4-NOT and PAN complexes and promotes decapping by the DCP1-DCP2 complex. Dissociates from silenced mRNAs after deadenylation. Required for completion of nuclear divisions during early embryonic development. The protein is Protein Gawky of Drosophila melanogaster (Fruit fly).